The primary structure comprises 417 residues: UDP-N-acetylglucosamine 1-carboxyvinyltransferase (417 aa).

Phosphoenolpyruvate is bound at residue 22-23 (KN). R92 is a binding site for UDP-N-acetyl-alpha-D-glucosamine. C116 serves as the catalytic Proton donor. Residue C116 is modified to 2-(S-cysteinyl)pyruvic acid O-phosphothioketal. 2 residues coordinate UDP-N-acetyl-alpha-D-glucosamine: D304 and I326.

The protein belongs to the EPSP synthase family. MurA subfamily.

It localises to the cytoplasm. It catalyses the reaction phosphoenolpyruvate + UDP-N-acetyl-alpha-D-glucosamine = UDP-N-acetyl-3-O-(1-carboxyvinyl)-alpha-D-glucosamine + phosphate. It functions in the pathway cell wall biogenesis; peptidoglycan biosynthesis. Functionally, cell wall formation. Adds enolpyruvyl to UDP-N-acetylglucosamine. This chain is UDP-N-acetylglucosamine 1-carboxyvinyltransferase, found in Desulforapulum autotrophicum (strain ATCC 43914 / DSM 3382 / VKM B-1955 / HRM2) (Desulfobacterium autotrophicum).